Consider the following 206-residue polypeptide: Outer-membrane lipoprotein carrier protein (206 aa).

An N-terminal signal peptide occupies residues 1 to 21 (MKKLLCAVLLSPLLYSNAVLA).

It belongs to the LolA family. As to quaternary structure, monomer.

The protein resides in the periplasm. Participates in the translocation of lipoproteins from the inner membrane to the outer membrane. Only forms a complex with a lipoprotein if the residue after the N-terminal Cys is not an aspartate (The Asp acts as a targeting signal to indicate that the lipoprotein should stay in the inner membrane). The polypeptide is Outer-membrane lipoprotein carrier protein (Shewanella sp. (strain MR-7)).